A 457-amino-acid polypeptide reads, in one-letter code: 3-isopropylmalate dehydratase large subunit (457 aa).

Residues Cys337, Cys397, and Cys400 each coordinate [4Fe-4S] cluster.

This sequence belongs to the aconitase/IPM isomerase family. LeuC type 1 subfamily. In terms of assembly, heterodimer of LeuC and LeuD. It depends on [4Fe-4S] cluster as a cofactor.

The catalysed reaction is (2R,3S)-3-isopropylmalate = (2S)-2-isopropylmalate. It functions in the pathway amino-acid biosynthesis; L-leucine biosynthesis; L-leucine from 3-methyl-2-oxobutanoate: step 2/4. In terms of biological role, catalyzes the isomerization between 2-isopropylmalate and 3-isopropylmalate, via the formation of 2-isopropylmaleate. This chain is 3-isopropylmalate dehydratase large subunit, found in Oenococcus oeni (strain ATCC BAA-331 / PSU-1).